The following is a 214-amino-acid chain: Dephospho-CoA kinase (214 aa).

The 195-residue stretch at arginine 20–phenylalanine 214 folds into the DPCK domain. Residue alanine 28 to isoleucine 33 coordinates ATP.

This sequence belongs to the CoaE family.

The protein localises to the cytoplasm. The enzyme catalyses 3'-dephospho-CoA + ATP = ADP + CoA + H(+). It functions in the pathway cofactor biosynthesis; coenzyme A biosynthesis; CoA from (R)-pantothenate: step 5/5. Its function is as follows. Catalyzes the phosphorylation of the 3'-hydroxyl group of dephosphocoenzyme A to form coenzyme A. This chain is Dephospho-CoA kinase, found in Prochlorococcus marinus (strain NATL2A).